The chain runs to 157 residues: Crossover junction endodeoxyribonuclease RuvC (157 aa).

Residues Asp7, Glu67, and Asp139 contribute to the active site. Mg(2+) is bound by residues Asp7, Glu67, and Asp139.

The protein belongs to the RuvC family. As to quaternary structure, homodimer which binds Holliday junction (HJ) DNA. The HJ becomes 2-fold symmetrical on binding to RuvC with unstacked arms; it has a different conformation from HJ DNA in complex with RuvA. In the full resolvosome a probable DNA-RuvA(4)-RuvB(12)-RuvC(2) complex forms which resolves the HJ. Mg(2+) serves as cofactor.

It is found in the cytoplasm. It carries out the reaction Endonucleolytic cleavage at a junction such as a reciprocal single-stranded crossover between two homologous DNA duplexes (Holliday junction).. Functionally, the RuvA-RuvB-RuvC complex processes Holliday junction (HJ) DNA during genetic recombination and DNA repair. Endonuclease that resolves HJ intermediates. Cleaves cruciform DNA by making single-stranded nicks across the HJ at symmetrical positions within the homologous arms, yielding a 5'-phosphate and a 3'-hydroxyl group; requires a central core of homology in the junction. The consensus cleavage sequence is 5'-(A/T)TT(C/G)-3'. Cleavage occurs on the 3'-side of the TT dinucleotide at the point of strand exchange. HJ branch migration catalyzed by RuvA-RuvB allows RuvC to scan DNA until it finds its consensus sequence, where it cleaves and resolves the cruciform DNA. The polypeptide is Crossover junction endodeoxyribonuclease RuvC (Prochlorococcus marinus (strain AS9601)).